A 152-amino-acid chain; its full sequence is Flagellar assembly factor FliW (152 aa).

This sequence belongs to the FliW family. Interacts with translational regulator CsrA and flagellin(s).

Its subcellular location is the cytoplasm. Its function is as follows. Acts as an anti-CsrA protein, binds CsrA and prevents it from repressing translation of its target genes, one of which is flagellin. Binds to flagellin and participates in the assembly of the flagellum. The chain is Flagellar assembly factor FliW from Caldicellulosiruptor bescii (strain ATCC BAA-1888 / DSM 6725 / KCTC 15123 / Z-1320) (Anaerocellum thermophilum).